A 582-amino-acid chain; its full sequence is uncharacterized protein (582 aa).

Residues 20–40 (GFWALGLFGAAINAFSAVLIV) form a helical membrane-spanning segment.

The protein localises to the membrane. This is an uncharacterized protein from Mycoplasma pneumoniae (strain ATCC 29342 / M129 / Subtype 1) (Mycoplasmoides pneumoniae).